The primary structure comprises 82 residues: Envelope small membrane protein (82 aa).

The Virion surface portion of the chain corresponds to 1–16 (MLPFVHEQIGTIIVNF). Residues 17–37 (FILTVVCAITLVVCLAILTAI) traverse the membrane as a helical segment. Over 38-78 (RLCVQCASGVNTLLFVPAFYIYNTGRNAYFKFQENRPPFPP) the chain is Intravirion.

The protein belongs to the betacoronaviruses E protein family. As to quaternary structure, homopentamer. Interacts with membrane protein M in the budding compartment of the host cell, which is located between endoplasmic reticulum and the Golgi complex. Interacts with Nucleoprotein.

It localises to the host Golgi apparatus membrane. Functionally, plays a central role in virus morphogenesis and assembly. Acts as a viroporin and self-assembles in host membranes forming pentameric protein-lipid pores that allow ion transport. Also plays a role in the induction of apoptosis. This Tylonycteris pachypus (Lesser bamboo bat) protein is Envelope small membrane protein.